The sequence spans 1466 residues: Helicase ARIP4 (1466 aa).

Disordered regions lie at residues 1 to 137 and 185 to 235; these read MSDE…ERRK and DSSS…THVN. The span at 11–49 shows a compositional bias: acidic residues; the sequence is PDLDPDVELEDEEEEEEEEEVAVEEHDRDDEEGLLDDTS. The span at 72–82 shows a compositional bias: low complexity; the sequence is TSTTSSQSEPS. Over residues 99–114 the composition is skewed to basic residues; it reads KKRAQKPSHMRRNIRK. Residues Lys114 and Lys126 each participate in a glycyl lysine isopeptide (Lys-Gly) (interchain with G-Cter in SUMO2) cross-link. A compositionally biased stretch (basic and acidic residues) spans 191 to 200; it reads EDEKSSRDEV. Lys271 is covalently cross-linked (Glycyl lysine isopeptide (Lys-Gly) (interchain with G-Cter in SUMO2)). Residues 291–511 enclose the Helicase ATP-binding domain; that stretch reads RFKTSSGFGC…WCMVDFVRPD (221 aa). 304 to 311 lines the ATP pocket; that stretch reads HSMGLGKT. Positions 462–465 match the DEAH box motif; that stretch reads DEGH. The LXXLL motif 1 motif lies at 550–554; the sequence is LHSLL. Positions 649–670 are disordered; it reads SAGTSARCPPHGTKVKGEDSAL. Residues Lys664, Lys681, Lys758, Lys900, Lys1013, and Lys1017 each participate in a glycyl lysine isopeptide (Lys-Gly) (interchain with G-Cter in SUMO2) cross-link. The region spanning 727–895 is the Helicase C-terminal domain; sequence HLIEESVKLG…RVVDDLNPML (169 aa). 2 disordered regions span residues 1026 to 1045 and 1120 to 1170; these read QSTP…GVSS and ATGK…VSPD. The span at 1135 to 1154 shows a compositional bias: polar residues; sequence SGSQGPSLASTSNGRHSASS. Phosphoserine is present on residues Ser1168 and Ser1171. Disordered regions lie at residues 1184-1212 and 1259-1281; these read VAAA…MDNS and TPSV…APVQ. The residue at position 1259 (Thr1259) is a Phosphothreonine. An LXXLL motif 2 motif is present at residues 1328 to 1332; it reads LSNLL. The interval 1444–1466 is disordered; sequence AEVGFSSNDDEDKDDDVIEVTGK. Acidic residues predominate over residues 1451-1466; that stretch reads NDDEDKDDDVIEVTGK.

The protein belongs to the SNF2/RAD54 helicase family. In terms of assembly, interacts with AR via its N-terminus. Interacts with DYRK1A. Binds DNA and mononucleosomes, but does not seem to form large multiprotein complexes. Post-translationally, sumoylated. In terms of tissue distribution, expressed at relatively low level, with highest expression in testis, liver and kidney. In brain, it is expressed in hippocampal and cerebellar neurons. In testis, it is present at high level in Sertoli cell nuclei. Also present in Leydig cell (at protein level).

The protein localises to the nucleus. The enzyme catalyses ATP + H2O = ADP + phosphate + H(+). With respect to regulation, enzyme activity is enhanced by dsDNA (double-stranded DNA) and ssDNA (single-stranded DNA). Functionally, DNA helicase that modulates androgen receptor (AR)-dependent transactivation in a promoter-dependent manner. Not able to remodel mononucleosomes in vitro. Acts as an AR-coregulator in Sertoli cells. The sequence is that of Helicase ARIP4 (Rad54l2) from Mus musculus (Mouse).